Consider the following 80-residue polypeptide: Ubiquitin-like protein NEDD8-like protein 2 (80 aa).

This sequence belongs to the ubiquitin family.

This chain is Ubiquitin-like protein NEDD8-like protein 2 (nedd8l2), found in Dictyostelium discoideum (Social amoeba).